A 686-amino-acid chain; its full sequence is LEAF RUST 10 DISEASE-RESISTANCE LOCUS RECEPTOR-LIKE PROTEIN KINASE-like 1.3 (686 aa).

A signal peptide spans 1–33; that stretch reads MFSPVLFRFSKPNSFLVLLFFLSYIHFLPCAQS. At 34 to 264 the chain is on the extracellular side; the sequence is QREPCDTLFR…AGLSKKGKIG (231 aa). N-linked (GlcNAc...) asparagine glycans are attached at residues N76, N93, N175, N190, and N236. A helical membrane pass occupies residues 265 to 285; sequence IGFASGFLGATLIGGCLLCIF. Topologically, residues 286-686 are cytoplasmic; the sequence is IRRRKKLATQ…SSSNTTASSF (401 aa). One can recognise a Protein kinase domain in the interval 358–633; the sequence is ENFSKELGDG…DEIVEVLRVI (276 aa). ATP is bound by residues 364 to 372 and K386; that span reads LGDGGFGTV. Residue Y432 is modified to Phosphotyrosine. Residue D482 is the Proton acceptor of the active site. Position 515 is a phosphoserine (S515). 2 positions are modified to phosphothreonine: T516 and T521. A Phosphotyrosine modification is found at Y529. A disordered region spans residues 657–686; sequence GLLKHGVPPPLSPETDKTTASSSNTTASSF. Over residues 674 to 686 the composition is skewed to low complexity; that stretch reads TTASSSNTTASSF.

The protein belongs to the protein kinase superfamily. Ser/Thr protein kinase family.

Its subcellular location is the cell membrane. The catalysed reaction is L-seryl-[protein] + ATP = O-phospho-L-seryl-[protein] + ADP + H(+). It catalyses the reaction L-threonyl-[protein] + ATP = O-phospho-L-threonyl-[protein] + ADP + H(+). The polypeptide is LEAF RUST 10 DISEASE-RESISTANCE LOCUS RECEPTOR-LIKE PROTEIN KINASE-like 1.3 (Arabidopsis thaliana (Mouse-ear cress)).